The sequence spans 486 residues: uncharacterized protein (486 aa).

ABC transporter domains are found at residues 2–241 (VEFK…KVFV) and 249–486 (FEKD…LLFL). ATP is bound at residue 36 to 43 (GKNGEGKS).

It belongs to the ABC transporter superfamily.

This is an uncharacterized protein from Borreliella burgdorferi (strain ATCC 35210 / DSM 4680 / CIP 102532 / B31) (Borrelia burgdorferi).